Here is a 356-residue protein sequence, read N- to C-terminus: MKREILLERIDKLKQLMPWYVLEYYQSKLAVPYSFTTLYEYLKEYDRFFSWVLESGISNADKISDIPLSVLENMSKKDMESFILYXRERPLLNANTTKQGVSQTTINRTLSALSSLYKYLTEEVENDQGEPYFYRNVMKKVSTKKKKETLAARAENIKQKLFLGDETEGFLTYIDQEHPQQLSNRALSSFNKNKERDLAIIALLLASGVRLSEAVNLDLRDLNLKMMVIDVTRKGGKRDSVNVAAFAKPYLENYLAIRNQRYKTEKTDTALFLTLYRGVPNRIDASSVEKMVAKYSEDFKVRVTPHKLRHTLATRLYDATKSQVLVSHQLGHASTQVTDLYTHIVNDEQKNALDSL.

The 106-residue stretch at 16-121 (LMPWYVLEYY…ALSSLYKYLT (106 aa)) folds into the Core-binding (CB) domain. The Tyr recombinase domain maps to 169–354 (GFLTYIDQEH…VNDEQKNALD (186 aa)). Residues Arg210, Lys234, His306, Arg309, and His332 contribute to the active site. Tyr341 (O-(3'-phospho-DNA)-tyrosine intermediate) is an active-site residue.

This sequence belongs to the 'phage' integrase family. XerS subfamily.

The protein resides in the cytoplasm. Its activity is regulated as follows. FtsK is required for recombination. Site-specific tyrosine recombinase, which acts by catalyzing the cutting and rejoining of the recombining DNA molecules. Essential to convert dimers of the bacterial chromosome into monomers to permit their segregation at cell division. This is Tyrosine recombinase XerS from Streptococcus pneumoniae serotype 19F (strain G54).